Reading from the N-terminus, the 166-residue chain is MSLLLRVGIGYDSHRFGEGGPMRLGGIDIPSDRHCAGHSDGDAICHAVTDALLGAAGLGDIGEMFPDTDAANKGKDSVVMLEAAVSRLHAAGWRVGNVDITVITQQPKIGPHRAAMRDRLATVLGVNSTEVFVKGKTNEGLGWIGREEGLGVIATATILAIGSSTL.

Aspartate 12 and histidine 14 together coordinate a divalent metal cation. Residues 12-14 and 38-39 contribute to the 4-CDP-2-C-methyl-D-erythritol 2-phosphate site; these read DSH and HS. Position 46 (histidine 46) interacts with a divalent metal cation. Residues 60–62, 65–69, and arginine 146 contribute to the 4-CDP-2-C-methyl-D-erythritol 2-phosphate site; these read DIG and FPDTD.

Belongs to the IspF family. In terms of assembly, homotrimer. Requires a divalent metal cation as cofactor.

The catalysed reaction is 4-CDP-2-C-methyl-D-erythritol 2-phosphate = 2-C-methyl-D-erythritol 2,4-cyclic diphosphate + CMP. The protein operates within isoprenoid biosynthesis; isopentenyl diphosphate biosynthesis via DXP pathway; isopentenyl diphosphate from 1-deoxy-D-xylulose 5-phosphate: step 4/6. Its function is as follows. Involved in the biosynthesis of isopentenyl diphosphate (IPP) and dimethylallyl diphosphate (DMAPP), two major building blocks of isoprenoid compounds. Catalyzes the conversion of 4-diphosphocytidyl-2-C-methyl-D-erythritol 2-phosphate (CDP-ME2P) to 2-C-methyl-D-erythritol 2,4-cyclodiphosphate (ME-CPP) with a corresponding release of cytidine 5-monophosphate (CMP). This is 2-C-methyl-D-erythritol 2,4-cyclodiphosphate synthase from Gemmatimonas aurantiaca (strain DSM 14586 / JCM 11422 / NBRC 100505 / T-27).